A 162-amino-acid chain; its full sequence is Lipid droplet assembly factor 1-A (162 aa).

Over Met-1–Gln-42 the chain is Cytoplasmic. The helical transmembrane segment at Tyr-43–Val-63 threads the bilayer. Topologically, residues Pro-64–Val-65 are lumenal. A helical membrane pass occupies residues Gly-66–Ile-86. Position 87 (Glu-87) is a topological domain, cytoplasmic. The helical transmembrane segment at Gly-88–Met-108 threads the bilayer. A topological domain (lumenal) is located at residue Ser-109. A helical membrane pass occupies residues Leu-110–Ile-130. The Cytoplasmic portion of the chain corresponds to His-131–Ser-162.

It belongs to the LDAF1 family.

Its subcellular location is the endoplasmic reticulum membrane. It is found in the lipid droplet. Functionally, plays an important role in the formation of lipid droplets (LD) which are storage organelles at the center of lipid and energy homeostasis. The chain is Lipid droplet assembly factor 1-A from Xenopus laevis (African clawed frog).